We begin with the raw amino-acid sequence, 281 residues long: INSIG family protein (281 aa).

Residues 1–93 (MSRKEIYEPR…FIDYSSLITF (93 aa)) lie on the Cytoplasmic side of the membrane. The residue at position 28 (Ser-28) is a Phosphoserine. The chain crosses the membrane as a helical span at residues 94–120 (FCKLCVIFGLGFVFTYLAEQIVQDAKL). Residues 121-134 (PLLTVNLKSWKFEP) are Lumenal-facing. Residues 135-159 (PWPAIFGFVAVILGLSYRRMDTKYP) traverse the membrane as a helical segment. Topologically, residues 160 to 170 (LGAAPLRPSQS) are cytoplasmic. A helical membrane pass occupies residues 171-186 (SKWQWISRYLAAFATL). The Lumenal segment spans residues 187 to 189 (LLS). Residues 190–215 (MKKLLFISNSHSIVALVASSASIWYI) traverse the membrane as a helical segment. The Cytoplasmic segment spans residues 216–221 (FDRSRN). Residues 222–256 (GIILSTITSVLGSILYYNLVDTSKIELNGVEFPEI) traverse the membrane as a helical segment. Residues 257–260 (QFRL) lie on the Lumenal side of the membrane. The helical transmembrane segment at 261–281 (WIPMILFSASTIVGNAGRLLF) threads the bilayer.

Belongs to the INSIG family.

The protein localises to the endoplasmic reticulum membrane. This chain is INSIG family protein (ins1), found in Schizosaccharomyces pombe (strain 972 / ATCC 24843) (Fission yeast).